Reading from the N-terminus, the 398-residue chain is Argininosuccinate synthase (398 aa).

9–17 (AYSGGLDTS) contacts ATP. Positions 87 and 92 each coordinate L-citrulline. An ATP-binding site is contributed by glycine 117. 3 residues coordinate L-aspartate: threonine 119, asparagine 123, and aspartate 124. An L-citrulline-binding site is contributed by asparagine 123. L-citrulline is bound by residues arginine 127, serine 176, serine 185, glutamate 261, and tyrosine 273.

Belongs to the argininosuccinate synthase family. Type 1 subfamily. In terms of assembly, homotetramer.

The protein resides in the cytoplasm. It carries out the reaction L-citrulline + L-aspartate + ATP = 2-(N(omega)-L-arginino)succinate + AMP + diphosphate + H(+). It participates in amino-acid biosynthesis; L-arginine biosynthesis; L-arginine from L-ornithine and carbamoyl phosphate: step 2/3. The polypeptide is Argininosuccinate synthase (Clostridium tetani (strain Massachusetts / E88)).